The chain runs to 271 residues: Aquaporin-2 (271 aa).

Residues 1-11 (MWELRSIAFSR) lie on the Cytoplasmic side of the membrane. A helical transmembrane segment spans residues 12–32 (AVLAEFLATLLFVFFGLGSAL). At 33 to 40 (NWPQALPS) the chain is on the extracellular side. The chain crosses the membrane as a helical span at residues 41 to 59 (VLQIAMAFGLAIGTLVQAL). At 60–64 (GHVSG) the chain is on the cytoplasmic side. Residues 65–74 (AHINPAVTVA) constitute an intramembrane region (discontinuously helical). Residues 68 to 70 (NPA) carry the NPA 1 motif. Residues 75-85 (CLVGCHVSFLR) lie on the Cytoplasmic side of the membrane. A helical transmembrane segment spans residues 86 to 107 (AVFYVAAQLLGAVAGAALLHEI). The Extracellular portion of the chain corresponds to 108–127 (TPPAIRGDLAVNALNNNSTA). N-linked (GlcNAc...) asparagine glycans are attached at residues asparagine 123 and asparagine 124. A helical transmembrane segment spans residues 128-148 (GQAVTVELFLTLQLVLCIFPS). The Cytoplasmic portion of the chain corresponds to 149–156 (TDKRRGKQ). The helical transmembrane segment at 157-176 (LGHPALSIGFSVALGHLLGI) threads the bilayer. Residues 177-180 (HYTG) are Extracellular-facing. Residues 181-193 (CSMNPARSLAPAI) constitute an intramembrane region (discontinuously helical). The NPA 2 signature appears at 184–186 (NPA). Over 194–201 (VTGKFDDH) the chain is Extracellular. The helical transmembrane segment at 202–222 (WVFWIGPLVGAIVASLLYNYV) threads the bilayer. Over 223-271 (LFPPAKSLSERLAVLKGLEPDTDWEEREVRRRQSVELHSPQSLPRGTKA) the chain is Cytoplasmic. The tract at residues 249–271 (REVRRRQSVELHSPQSLPRGTKA) is disordered. Serine 256 carries the post-translational modification Phosphoserine. Over residues 261–271 (SPQSLPRGTKA) the composition is skewed to polar residues.

This sequence belongs to the MIP/aquaporin (TC 1.A.8) family. In terms of assembly, homotetramer. In terms of processing, ser-256 phosphorylation is necessary and sufficient for expression at the apical membrane. Endocytosis is not phosphorylation-dependent. Post-translationally, N-glycosylated. Expressed in renal collecting tubules.

It is found in the apical cell membrane. The protein localises to the basolateral cell membrane. It localises to the cell membrane. Its subcellular location is the cytoplasmic vesicle membrane. The protein resides in the golgi apparatus. It is found in the trans-Golgi network membrane. It carries out the reaction H2O(in) = H2O(out). It catalyses the reaction glycerol(in) = glycerol(out). In terms of biological role, forms a water-specific channel that provides the plasma membranes of renal collecting duct with high permeability to water, thereby permitting water to move in the direction of an osmotic gradient. Could also be permeable to glycerol. The polypeptide is Aquaporin-2 (Ovis aries (Sheep)).